We begin with the raw amino-acid sequence, 255 residues long: Protein YIPF7 (255 aa).

The Cytoplasmic portion of the chain corresponds to 1-124; that stretch reads MSNLGQFDSD…ADGSIMNETD (124 aa). A helical membrane pass occupies residues 125–145; the sequence is LTGPILFCMALGATLLLAGKV. Residue Gln-146 is a topological domain, lumenal. A helical membrane pass occupies residues 147-167; the sequence is FGYVYGMSAIGCLGIHALLNL. Residues 168-180 are Cytoplasmic-facing; it reads MSSSGVSYGCVAS. Residues 181–201 traverse the membrane as a helical segment; the sequence is VLGYCLLPMVILSSCAIFFSL. Over 202-204 the chain is Lumenal; it reads QGT. A helical transmembrane segment spans residues 205-225; sequence FGTVSALVIIGWCSLSASKIF. The Cytoplasmic segment spans residues 226 to 234; it reads TSALAMEGQ. Residues 235–255 traverse the membrane as a helical segment; it reads QLLIAYPCALLYGLFALVTVF.

It belongs to the YIP1 family.

Its subcellular location is the endoplasmic reticulum membrane. It is found in the golgi apparatus. It localises to the cis-Golgi network membrane. The protein localises to the trans-Golgi network membrane. The chain is Protein YIPF7 (YIPF7) from Bos taurus (Bovine).